Reading from the N-terminus, the 295-residue chain is Uridine and thymidine phosphorylase (295 aa).

Phosphate is bound by residues Arg-81 and 125-128; that span reads RLGT. Positions 203 and 205 each coordinate substrate.

This sequence belongs to the PNP/UDP phosphorylase family. As to expression, expressed in hypodermis, pharynx, spermatheca and gonad.

It catalyses the reaction uridine + phosphate = alpha-D-ribose 1-phosphate + uracil. The enzyme catalyses thymidine + phosphate = 2-deoxy-alpha-D-ribose 1-phosphate + thymine. The catalysed reaction is 2'-deoxyuridine + phosphate = 2-deoxy-alpha-D-ribose 1-phosphate + uracil. Its pathway is pyrimidine metabolism; UMP biosynthesis via salvage pathway; uracil from uridine (phosphorylase route): step 1/1. It functions in the pathway pyrimidine metabolism; dTMP biosynthesis via salvage pathway; dTMP from thymine: step 1/2. Its function is as follows. Catalyzes the reversible phosphorylytic cleavage of uridine and thymidine to uracil and ribose-phosphate or thymine and deoxyribose-1-phosphate. The produced molecules are then utilized as carbon and energy sources or in the rescue of pyrimidine bases for nucleotide synthesis. Required for normal lifespan. The chain is Uridine and thymidine phosphorylase from Caenorhabditis elegans.